The chain runs to 414 residues: Glutathione gamma-glutamylcysteinyltransferase (414 aa).

The region spanning 37–256 is the Peptidase C83 domain; it reads QLKKSFYKRQ…GYVLLEPMHI (220 aa).

This sequence belongs to the phytochelatin synthase family.

The catalysed reaction is [Glu(-Cys)](n)-Gly + glutathione + H(+) = [Glu(-Cys)](n+1)-Gly + glycine. In terms of biological role, required for detoxification of heavy metals such as cadmium and arsenate. This Schizosaccharomyces pombe (strain 972 / ATCC 24843) (Fission yeast) protein is Glutathione gamma-glutamylcysteinyltransferase.